The sequence spans 434 residues: Putative nuclease OPG089 (434 aa).

Aspartate 33, aspartate 74, glutamate 168, aspartate 170, aspartate 196, and aspartate 198 together coordinate Mg(2+).

It belongs to the XPG/RAD2 endonuclease family. FEN1 subfamily. It depends on Mg(2+) as a cofactor.

It localises to the virion. Putative nuclease that seems to be required for double-strand break repair, homologous recombination, and production of full-length viral genomic DNA. In Homo sapiens (Human), this protein is Putative nuclease OPG089 (OPG089).